The primary structure comprises 803 residues: Leucine--tRNA ligase (803 aa).

The 'HIGH' region signature appears at 40-51; sequence PYPSGAGLHVGH. The 'KMSKS' region motif lies at 575–579; sequence KMSKS. K578 is an ATP binding site.

This sequence belongs to the class-I aminoacyl-tRNA synthetase family.

It is found in the cytoplasm. It carries out the reaction tRNA(Leu) + L-leucine + ATP = L-leucyl-tRNA(Leu) + AMP + diphosphate. The sequence is that of Leucine--tRNA ligase from Listeria monocytogenes serotype 4a (strain HCC23).